We begin with the raw amino-acid sequence, 37 residues long: Large ribosomal subunit protein bL36c (37 aa).

It belongs to the bacterial ribosomal protein bL36 family.

It is found in the plastid. It localises to the chloroplast. This chain is Large ribosomal subunit protein bL36c, found in Physcomitrium patens (Spreading-leaved earth moss).